The following is a 491-amino-acid chain: LETM1 domain-containing protein LETM2, mitochondrial (491 aa).

The N-terminal 25 residues, 1–25 (MAFYSYNSVLAIARTRFPSHFVHPT), are a transit peptide targeting the mitochondrion. Over 26 to 177 (CSSYSPSCAF…LLRTCVDFFR (152 aa)) the chain is Mitochondrial intermembrane. Over residues 94-109 (EQATKHPQVTSPQATK) the composition is skewed to polar residues. Residues 94-115 (EQATKHPQVTSPQATKETGMEI) are disordered. A helical membrane pass occupies residues 178–198 (LVPFMVFLIVPFMEFLLPVFL). Residues 199 to 491 (KLFPEMLPST…QNSKASSKGA (293 aa)) are Mitochondrial matrix-facing. Residues 208–235 (TFESESKKEEKQKKKMAVKLELAKFLQE) are a coiled coil. Positions 221–438 (KKMAVKLELA…LAPQLKGTKD (218 aa)) constitute a Letm1 RBD domain. The segment at 435–491 (GTKDEDFIQPPPVTSSPITPSTPISLPKGPITSSEEPTLQAKSQMTAQNSKASSKGA) is disordered. The span at 449-461 (SSPITPSTPISLP) shows a compositional bias: low complexity. Positions 465-491 (ITSSEEPTLQAKSQMTAQNSKASSKGA) are enriched in polar residues.

Its subcellular location is the mitochondrion inner membrane. This chain is LETM1 domain-containing protein LETM2, mitochondrial (LETM2), found in Homo sapiens (Human).